The chain runs to 79 residues: Small ribosomal subunit protein bS18B (79 aa).

The segment covering methionine 1–proline 11 has biased composition (basic and acidic residues). Positions methionine 1–valine 24 are disordered.

The protein belongs to the bacterial ribosomal protein bS18 family. In terms of assembly, part of the 30S ribosomal subunit. Forms a tight heterodimer with protein bS6.

In terms of biological role, binds as a heterodimer with protein bS6 to the central domain of the 16S rRNA, where it helps stabilize the platform of the 30S subunit. This Streptomyces coelicolor (strain ATCC BAA-471 / A3(2) / M145) protein is Small ribosomal subunit protein bS18B.